An 86-amino-acid polypeptide reads, in one-letter code: Large ribosomal subunit protein uL23 (86 aa).

The protein belongs to the universal ribosomal protein uL23 family. In terms of assembly, part of the 50S ribosomal subunit. Contacts protein L29.

Functionally, binds to 23S rRNA. One of the proteins that surrounds the polypeptide exit tunnel on the outside of the ribosome. The chain is Large ribosomal subunit protein uL23 from Thermococcus kodakarensis (strain ATCC BAA-918 / JCM 12380 / KOD1) (Pyrococcus kodakaraensis (strain KOD1)).